A 273-amino-acid polypeptide reads, in one-letter code: Dermonecrotic toxin LhSicTox-alphaIA2avii (273 aa).

Residue His-5 is part of the active site. Positions 25 and 27 each coordinate Mg(2+). His-41 serves as the catalytic Nucleophile. 2 disulfide bridges follow: Cys-45/Cys-51 and Cys-47/Cys-190. Residue Asp-85 coordinates Mg(2+).

This sequence belongs to the arthropod phospholipase D family. Class II subfamily. Mg(2+) serves as cofactor. As to expression, expressed by the venom gland.

The protein localises to the secreted. The enzyme catalyses an N-(acyl)-sphingosylphosphocholine = an N-(acyl)-sphingosyl-1,3-cyclic phosphate + choline. It carries out the reaction an N-(acyl)-sphingosylphosphoethanolamine = an N-(acyl)-sphingosyl-1,3-cyclic phosphate + ethanolamine. It catalyses the reaction a 1-acyl-sn-glycero-3-phosphocholine = a 1-acyl-sn-glycero-2,3-cyclic phosphate + choline. The catalysed reaction is a 1-acyl-sn-glycero-3-phosphoethanolamine = a 1-acyl-sn-glycero-2,3-cyclic phosphate + ethanolamine. Functionally, dermonecrotic toxins cleave the phosphodiester linkage between the phosphate and headgroup of certain phospholipids (sphingolipid and lysolipid substrates), forming an alcohol (often choline) and a cyclic phosphate. This toxin acts on sphingomyelin (SM). It may also act on ceramide phosphoethanolamine (CPE), lysophosphatidylcholine (LPC) and lysophosphatidylethanolamine (LPE), but not on lysophosphatidylserine (LPS), and lysophosphatidylglycerol (LPG). It acts by transphosphatidylation, releasing exclusively cyclic phosphate products as second products. Induces dermonecrosis, hemolysis, increased vascular permeability, edema, inflammatory response, and platelet aggregation. The chain is Dermonecrotic toxin LhSicTox-alphaIA2avii from Loxosceles hirsuta (Recluse spider).